A 470-amino-acid chain; its full sequence is 3-isopropylmalate dehydratase large subunit (470 aa).

Positions 351, 411, and 414 each coordinate [4Fe-4S] cluster.

It belongs to the aconitase/IPM isomerase family. LeuC type 1 subfamily. As to quaternary structure, heterodimer of LeuC and LeuD. [4Fe-4S] cluster is required as a cofactor.

The catalysed reaction is (2R,3S)-3-isopropylmalate = (2S)-2-isopropylmalate. The protein operates within amino-acid biosynthesis; L-leucine biosynthesis; L-leucine from 3-methyl-2-oxobutanoate: step 2/4. In terms of biological role, catalyzes the isomerization between 2-isopropylmalate and 3-isopropylmalate, via the formation of 2-isopropylmaleate. The polypeptide is 3-isopropylmalate dehydratase large subunit (Rhodopseudomonas palustris (strain BisB5)).